Reading from the N-terminus, the 207-residue chain is MSYSGERDNLAPHMALVPMVIEQTSRGERSFDIYSRLLKERVIFLTGQVEDHMANLIVAQMLFLEAENPEKDIYLYINSPGGVITAGMSIYDTMQFIKPDVSTICMGQAASMGAFLLTAGAKGKRFCLPNSRVMIHQPLGGYQGQATDIEIHAREILKVKGRMNELMAHHTGQSLEQIERDTERDRFLSAPEAVEYGLVDSILTHRN.

The active-site Nucleophile is Ser111. Residue His136 is part of the active site.

This sequence belongs to the peptidase S14 family. Fourteen ClpP subunits assemble into 2 heptameric rings which stack back to back to give a disk-like structure with a central cavity, resembling the structure of eukaryotic proteasomes. Component of the ClpAP and ClpXP complexes.

It localises to the cytoplasm. The catalysed reaction is Hydrolysis of proteins to small peptides in the presence of ATP and magnesium. alpha-casein is the usual test substrate. In the absence of ATP, only oligopeptides shorter than five residues are hydrolyzed (such as succinyl-Leu-Tyr-|-NHMec, and Leu-Tyr-Leu-|-Tyr-Trp, in which cleavage of the -Tyr-|-Leu- and -Tyr-|-Trp bonds also occurs).. Cleaves peptides in various proteins in a process that requires ATP hydrolysis. Has a chymotrypsin-like activity. Plays a major role in the degradation of misfolded proteins. In Salmonella enteritidis PT4 (strain P125109), this protein is ATP-dependent Clp protease proteolytic subunit.